Here is a 127-residue protein sequence, read N- to C-terminus: Large ribosomal subunit protein bL12 (127 aa).

This sequence belongs to the bacterial ribosomal protein bL12 family. In terms of assembly, homodimer. Part of the ribosomal stalk of the 50S ribosomal subunit. Forms a multimeric L10(L12)X complex, where L10 forms an elongated spine to which 2 to 4 L12 dimers bind in a sequential fashion. Binds GTP-bound translation factors.

Functionally, forms part of the ribosomal stalk which helps the ribosome interact with GTP-bound translation factors. Is thus essential for accurate translation. The chain is Large ribosomal subunit protein bL12 from Caulobacter vibrioides (strain ATCC 19089 / CIP 103742 / CB 15) (Caulobacter crescentus).